Reading from the N-terminus, the 146-residue chain is Acidic phospholipase A2 S13-69J (146 aa).

Positions 1-19 (MYPAHLLVLLAVCVSLLGA) are cleaved as a signal peptide. A propeptide spanning residues 20-27 (ASIPPQPL) is cleaved from the precursor. Intrachain disulfides connect C38–C98, C54–C145, C56–C72, C71–C126, C78–C119, C87–C112, and C105–C117. Residues Y55, G57, and G59 each contribute to the Ca(2+) site. The active site involves H75. A Ca(2+)-binding site is contributed by D76. D120 is an active-site residue.

This sequence belongs to the phospholipase A2 family. Group I subfamily. D49 sub-subfamily. It depends on Ca(2+) as a cofactor. As to expression, expressed by the venom gland.

The protein localises to the secreted. The enzyme catalyses a 1,2-diacyl-sn-glycero-3-phosphocholine + H2O = a 1-acyl-sn-glycero-3-phosphocholine + a fatty acid + H(+). Its function is as follows. Snake venom phospholipase A2 (PLA2) that inhibits collagen-induced platelet aggregation. PLA2 catalyzes the calcium-dependent hydrolysis of the 2-acyl groups in 3-sn-phosphoglycerides. The chain is Acidic phospholipase A2 S13-69J from Austrelaps superbus (Lowland copperhead snake).